Reading from the N-terminus, the 93-residue chain is MARSIKKGPFVDAHLEAKVQAEGASSKKVIKTWSRRSTITPDFIGLTFAVHNGRKFIPVFVTENMVGHKMGEFAPTRTFFGHAADKKSKLKKK.

This sequence belongs to the universal ribosomal protein uS19 family.

In terms of biological role, protein S19 forms a complex with S13 that binds strongly to the 16S ribosomal RNA. This Geotalea daltonii (strain DSM 22248 / JCM 15807 / FRC-32) (Geobacter daltonii) protein is Small ribosomal subunit protein uS19.